A 55-amino-acid polypeptide reads, in one-letter code: Antiviral protein GAP-31 (55 aa).

A disordered region spans residues 29–55; it reads KPEGNSHGIPSLRKSSDDPGSSFVVAG.

Belongs to the ribosome-inactivating protein family. Type 1 RIP subfamily.

The catalysed reaction is Endohydrolysis of the N-glycosidic bond at one specific adenosine on the 28S rRNA.. Single-chain ribosome-inactivating protein, possessing high antiviral potency and low toxicity to normal cells in culture and to intact animals. Capable of inhibiting HIV-1 infection and replication. This Suregada multiflora (False lime) protein is Antiviral protein GAP-31.